The following is a 1017-amino-acid chain: MAPRALWSCYLCCLLTIATEAASYPPRGYSLYTGGTGALSPGGPQAQNSPRPASRHRNWCAYVVTRTVSCVLEDGVETIVKPDYQPCGWGQPHCSRSIMYRSFLRPRYRVAYKTVTDMEWRCCQGYGGDDCGEGPASVLGPAPSTPLPRPRPVRPNLSGSSAGSHLSGLGGEGPVESEKVQQLERQVKSLTKELQGLRGVLQGMNGRLAEDVQRAVDTVFNGRQQPADAAARPGVHETLSEIQQQLQLLDNRVSTHDQELGHLNNHHNGGPGGGGRASGPVPVPSGPSEELLRQLERQLQESCSVCLTGLDGFRQQQQEDRERLRTLEKLMSSMEERQQQLVGPAMARRPPQECCPPELGRRVSELERRLDVVTGSLTVLSGRRGSELGGAAGQGGHPPGYTSLASRLSRLEDRFNSTLGPSEEQEKNWPGGPGRLGHWLPAAPGRLEKLEGLLANVSRELGGRMDLLEEQVAGAVRTCGQICSGAPGEQDSRVNEILSALERRVLDSEGRLQLVGSGLHEAEAAGEAQQAVLEGLQGLLSRLRERMDAQEETAAEILLRLNLTAAQLSQLEGLLQARGDEGCGACGGVQEELGRLRDGVERCSCPLLPPRGPGAGPGVGGPSRGPLDGFSVFGGSSGSALQALQGELSEVILTFSSLNDSLHELQTTVEGQGADLADLGATKDSIISEINRLQQEATEHVTESEERFRGLEEGQAQAGQCPSLEGRLGRLEGVCERLDTVAGGLQGLREGLSRHVAGLWAAVRESNSTSLTQAALLEKLLGGQAGLGRRLGALNNSLLLLEDRLQQLSLKDFTGPSGKAGPPGPPGLQGPSGPAGPPGPPGKDGQQGAIGPPGPQGEQGAEGAPAAPVPRVAFSAALSLPRSEPGTVPFDRVLLNDGGYYDPETGVFTAPLAGRYLLSAVLTGHRHEKVEAVLSRSNLGVARIDSGGYEPEGLENKPVAESQPSPGALGVFSLILPLQVGDTVCIDLVMGQLAHSEEPLTIFSGALLYEDTELEQV.

A signal peptide spans 1-21 (MAPRALWSCYLCCLLTIATEA). The region spanning 56 to 133 (HRNWCAYVVT…QGYGGDDCGE (78 aa)) is the EMI domain. Disulfide bonds link cysteine 60–cysteine 123, cysteine 87–cysteine 94, and cysteine 122–cysteine 131. 2 disordered regions span residues 134 to 180 (GPAS…SEKV) and 259 to 289 (ELGHLNNHHNGGPGGGGRASGPVPVPSGPSE). The span at 154–167 (RPNLSGSSAGSHLS) shows a compositional bias: low complexity. N-linked (GlcNAc...) asparagine glycosylation is present at asparagine 156. 3 coiled-coil regions span residues 171 to 211 (GEGP…LAED), 237 to 266 (ETLSEIQQQLQLLDNRVSTHDQELGHLNNH), and 310 to 374 (LDGF…DVVT). A disordered region spans residues 383–403 (RRGSELGGAAGQGGHPPGYTS). Residues 387–398 (ELGGAAGQGGHP) are compositionally biased toward gly residues. N-linked (GlcNAc...) asparagine glycans are attached at residues asparagine 416, asparagine 456, asparagine 562, and asparagine 659. A coiled-coil region spans residues 519–573 (LHEAEAAGEAQQAVLEGLQGLLSRLRERMDAQEETAAEILLRLNLTAAQLSQLEG). Positions 676–697 (LADLGATKDSIISEINRLQQEA) form a coiled coil. Residues asparagine 767 and asparagine 795 are each glycosylated (N-linked (GlcNAc...) asparagine). A coiled-coil region spans residues 789–809 (RRLGALNNSLLLLEDRLQQLS). The segment covering 811–820 (KDFTGPSGKA) has biased composition (low complexity). The tract at residues 811–866 (KDFTGPSGKAGPPGPPGLQGPSGPAGPPGPPGKDGQQGAIGPPGPQGEQGAEGAPA) is disordered. Residues 815-865 (GPSGKAGPPGPPGLQGPSGPAGPPGPPGKDGQQGAIGPPGPQGEQGAEGAP) form the Collagen-like domain. Positions 822–841 (PPGPPGLQGPSGPAGPPGPP) are enriched in pro residues. Residues 843–866 (KDGQQGAIGPPGPQGEQGAEGAPA) are compositionally biased toward low complexity. In terms of domain architecture, C1q spans 867-1014 (APVPRVAFSA…GALLYEDTEL (148 aa)).

In terms of assembly, homotrimer associated through a moderately stable interaction of the C-terminal globular C1q domains, allowing the nucleation of the triple helix and then a further quaternary assembly to higher-order polymers via intermolecular disulfide bonds. Interacts with EMILIN2. Interacts with EFEMP2; this interaction promotes the incorporation of EFEMP2 into the extracellular matrix.

The protein localises to the secreted. It is found in the extracellular space. Its subcellular location is the extracellular matrix. Its function is as follows. Involved in elastic and collagen fibers formation. It is required for EFEMP2 deposition into the extracellular matrix, and collagen network assembly and cross-linking via protein-lysine 6-oxidase/LOX activity. May be responsible for anchoring smooth muscle cells to elastic fibers, and may be involved the processes that regulate vessel assembly. Has cell adhesive capacity. May have a function in placenta formation and initial organogenesis and a later role in interstitial connective tissue. The protein is EMILIN-1 (Emilin1) of Mus musculus (Mouse).